A 521-amino-acid polypeptide reads, in one-letter code: Protein DML1 (521 aa).

The protein belongs to the misato family.

Its subcellular location is the mitochondrion. Functionally, involved in the partitioning of the mitochondrial organelle and mitochondrial DNA (mtDNA) inheritance. This is Protein DML1 (DML1) from Phaeosphaeria nodorum (strain SN15 / ATCC MYA-4574 / FGSC 10173) (Glume blotch fungus).